We begin with the raw amino-acid sequence, 1058 residues long: Isoleucine--tRNA ligase (1058 aa).

The 'HIGH' region signature appears at 48-58 (PYTTGHIHLGT). Residues 596–600 (KMSKS) carry the 'KMSKS' region motif. Position 599 (Lys-599) interacts with ATP.

Belongs to the class-I aminoacyl-tRNA synthetase family. IleS type 2 subfamily. In terms of assembly, monomer. Zn(2+) serves as cofactor.

It is found in the cytoplasm. The enzyme catalyses tRNA(Ile) + L-isoleucine + ATP = L-isoleucyl-tRNA(Ile) + AMP + diphosphate. Functionally, catalyzes the attachment of isoleucine to tRNA(Ile). As IleRS can inadvertently accommodate and process structurally similar amino acids such as valine, to avoid such errors it has two additional distinct tRNA(Ile)-dependent editing activities. One activity is designated as 'pretransfer' editing and involves the hydrolysis of activated Val-AMP. The other activity is designated 'posttransfer' editing and involves deacylation of mischarged Val-tRNA(Ile). The polypeptide is Isoleucine--tRNA ligase (Methanosarcina mazei (strain ATCC BAA-159 / DSM 3647 / Goe1 / Go1 / JCM 11833 / OCM 88) (Methanosarcina frisia)).